A 558-amino-acid chain; its full sequence is Formate--tetrahydrofolate ligase (558 aa).

Position 67-74 (67-74 (TPAGEGKT)) interacts with ATP.

It belongs to the formate--tetrahydrofolate ligase family.

It carries out the reaction (6S)-5,6,7,8-tetrahydrofolate + formate + ATP = (6R)-10-formyltetrahydrofolate + ADP + phosphate. The protein operates within one-carbon metabolism; tetrahydrofolate interconversion. The chain is Formate--tetrahydrofolate ligase from Ruegeria sp. (strain TM1040) (Silicibacter sp.).